Here is a 41-residue protein sequence, read N- to C-terminus: Photosystem I reaction center subunit IX (41 aa).

Residues 7–27 (YLSTAPVLTLVSLTAVAGLLI) traverse the membrane as a helical segment.

This sequence belongs to the PsaJ family.

Its subcellular location is the plastid. It is found in the chloroplast thylakoid membrane. Its function is as follows. May help in the organization of the PsaE and PsaF subunits. The chain is Photosystem I reaction center subunit IX from Chlorella vulgaris (Green alga).